The sequence spans 1161 residues: Type IV pilus biogenesis factor PilY1 (1161 aa).

The signal sequence occupies residues 1-30 (MKSVLHQIGKTSLAAALSGAVLLSAQTTHA). 4 residues coordinate Ca(2+): Asp598, Asp600, Asn602, and Asp606. The integrin-binding motif RGD stretch occupies residues 617–619 (RGD). Ca(2+) contacts are provided by Asp849, Asn851, Asp853, Val855, and Asp857. Residues 1136–1161 (SGECLTVNPGPNTRGRQNWRPIEGKN) are disordered.

This sequence belongs to the PilY1 family. In terms of assembly, interacts (via C-terminus) with host integrins alpha-V/beta-3 (ITGAV/ITGB3) and alpha-V/beta-5 (ITGAV/ITGB5).

The protein resides in the fimbrium. The protein localises to the membrane. It is found in the cytoplasm. It localises to the cytosol. Involved in pilus assembly, twitching motility and adhesion to host cells. Primes type IV pili (T4P) assembly and is required for inclusion of minor pilins PilV, PilW and PilX to the surface pili. Stabilizes assembled pilus fibers likely by antagonizing retraction mediated by PilT. Calcium-binding and calcium release by PilY1 seem to be essential for twitching motility and for regulation of pilus retraction dynamics of PilT. The chain is Type IV pilus biogenesis factor PilY1 from Pseudomonas aeruginosa (strain ATCC 15692 / DSM 22644 / CIP 104116 / JCM 14847 / LMG 12228 / 1C / PRS 101 / PAO1).